We begin with the raw amino-acid sequence, 198 residues long: Recombination protein RecR (198 aa).

Residues 57–72 (CSVCGHITDKDPCYIC) form a C4-type zinc finger. Residues 80–175 (SVICVVQESK…KVTRIAHGLP (96 aa)) enclose the Toprim domain.

Belongs to the RecR family.

Its function is as follows. May play a role in DNA repair. It seems to be involved in an RecBC-independent recombinational process of DNA repair. It may act with RecF and RecO. The sequence is that of Recombination protein RecR from Listeria monocytogenes serotype 4b (strain CLIP80459).